The sequence spans 462 residues: tRNA modification GTPase MnmE (462 aa).

(6S)-5-formyl-5,6,7,8-tetrahydrofolate-binding residues include R26, E91, and R130. One can recognise a TrmE-type G domain in the interval G228–F382. Position 238 (N238) interacts with K(+). GTP is bound by residues N238–Q243, T257–T263, and D282–G285. Residue S242 coordinates Mg(2+). The K(+) site is built by T257, I259, and T262. T263 lines the Mg(2+) pocket. A (6S)-5-formyl-5,6,7,8-tetrahydrofolate-binding site is contributed by K462.

This sequence belongs to the TRAFAC class TrmE-Era-EngA-EngB-Septin-like GTPase superfamily. TrmE GTPase family. Homodimer. Heterotetramer of two MnmE and two MnmG subunits. The cofactor is K(+).

The protein resides in the cytoplasm. Exhibits a very high intrinsic GTPase hydrolysis rate. Involved in the addition of a carboxymethylaminomethyl (cmnm) group at the wobble position (U34) of certain tRNAs, forming tRNA-cmnm(5)s(2)U34. This Streptococcus agalactiae protein is tRNA modification GTPase MnmE.